A 467-amino-acid chain; its full sequence is Glutamate--tRNA ligase (467 aa).

The short motif at 10 to 20 is the 'HIGH' region element; sequence PSPTGYLHVGG. Residues 238 to 242 carry the 'KMSKS' region motif; the sequence is RLSKR. An ATP-binding site is contributed by lysine 241.

Belongs to the class-I aminoacyl-tRNA synthetase family. Glutamate--tRNA ligase type 1 subfamily. In terms of assembly, monomer.

The protein resides in the cytoplasm. It catalyses the reaction tRNA(Glu) + L-glutamate + ATP = L-glutamyl-tRNA(Glu) + AMP + diphosphate. In terms of biological role, catalyzes the attachment of glutamate to tRNA(Glu) in a two-step reaction: glutamate is first activated by ATP to form Glu-AMP and then transferred to the acceptor end of tRNA(Glu). In Citrifermentans bemidjiense (strain ATCC BAA-1014 / DSM 16622 / JCM 12645 / Bem) (Geobacter bemidjiensis), this protein is Glutamate--tRNA ligase.